We begin with the raw amino-acid sequence, 151 residues long: MKVQTKWFGEIEVSEDKIITFDKGIIGFEDWKKYTLVYDAEKEENISIIWLQAIDEPTLALPVMKPEFVFETYDPVVEDELLKALGDDIQDDNIRVYCALTVPRDITKMTINLKAPIIVDFDTMKGIQLIADNSEYQVRYPIYDILKKEEN.

This sequence belongs to the FliW family. Interacts with translational regulator CsrA and flagellin(s).

Its subcellular location is the cytoplasm. In terms of biological role, acts as an anti-CsrA protein, binds CsrA and prevents it from repressing translation of its target genes, one of which is flagellin. Binds to flagellin and participates in the assembly of the flagellum. The protein is Flagellar assembly factor FliW of Lachnospira eligens (strain ATCC 27750 / DSM 3376 / VPI C15-48 / C15-B4) (Eubacterium eligens).